A 231-amino-acid chain; its full sequence is DNA mismatch repair protein MutH (231 aa).

This sequence belongs to the MutH family.

The protein localises to the cytoplasm. Its function is as follows. Sequence-specific endonuclease that cleaves unmethylated GATC sequences. It is involved in DNA mismatch repair. The protein is DNA mismatch repair protein MutH of Pectobacterium atrosepticum (strain SCRI 1043 / ATCC BAA-672) (Erwinia carotovora subsp. atroseptica).